The sequence spans 453 residues: GTPase Der (453 aa).

2 EngA-type G domains span residues 3 to 167 and 187 to 360; these read PIIV…ISEK and IKVA…EDSK. GTP is bound by residues 9–16, 57–61, 119–122, 193–200, 240–244, and 305–308; these read GRTNVGKS, DTAGL, NKID, GRPNVGKS, DTAGA, and NKCD. The KH-like domain maps to 361-445; sequence RKISTSTLIK…PIQIQFKDNE (85 aa).

This sequence belongs to the TRAFAC class TrmE-Era-EngA-EngB-Septin-like GTPase superfamily. EngA (Der) GTPase family. As to quaternary structure, associates with the 50S ribosomal subunit.

Functionally, GTPase that plays an essential role in the late steps of ribosome biogenesis. This is GTPase Der from Buchnera aphidicola subsp. Acyrthosiphon pisum (strain 5A).